Reading from the N-terminus, the 297-residue chain is Homoserine kinase (297 aa).

ATP is bound at residue 84 to 94 (PLSKGFGSSAA).

This sequence belongs to the GHMP kinase family. Homoserine kinase subfamily.

Its subcellular location is the cytoplasm. It carries out the reaction L-homoserine + ATP = O-phospho-L-homoserine + ADP + H(+). It participates in amino-acid biosynthesis; L-threonine biosynthesis; L-threonine from L-aspartate: step 4/5. In terms of biological role, catalyzes the ATP-dependent phosphorylation of L-homoserine to L-homoserine phosphate. The polypeptide is Homoserine kinase (Shouchella clausii (strain KSM-K16) (Alkalihalobacillus clausii)).